A 773-amino-acid chain; its full sequence is Transducin-like enhancer protein 4 (773 aa).

Disordered regions lie at residues 1–22 (MIRD…QPAQ), 140–162 (HGHG…AIPP), and 182–357 (LPIK…DPLA). Positions 1–136 (MIRDLSKMYP…AIIGQQLQAQ (136 aa)) are q domain. Residues 137–204 (HLSHGHGLPV…HQRDRDSIKS (68 aa)) are GP domain. Positions 183–202 (PIKDEKKHHDNDHQRDRDSI) are enriched in basic and acidic residues. Positions 203 to 214 (KSSSVSPSASFR) are enriched in low complexity. The ccN domain stretch occupies residues 205–274 (SSVSPSASFR…SPRGSPAHSP (70 aa)). A phosphoserine mark is found at S208, S212, S216, and S222. Positions 215-252 (GSEKHRNSTDYSSESKKQKTEEKEIAARYDSDGEKSDD) are enriched in basic and acidic residues. An N6-acetyllysine modification is found at K237. Phosphoserine is present on S245. S250 is subject to Phosphoserine; by CK2. A Phosphoserine; by CDK1 modification is found at S265. Phosphoserine occurs at positions 269 and 273. A compositionally biased stretch (basic and acidic residues) spans 273–289 (SPRENGLDKTRLLKKDA). The SP domain stretch occupies residues 275 to 452 (RENGLDKTRL…PGGKPAYSFH (178 aa)). Residue K281 is modified to N6-acetyllysine. Residues 290–305 (PISPASVASSSSTPSS) are compositionally biased toward low complexity. S292 carries the phosphoserine modification. The segment covering 317–328 (TTPVSKSNTPTP) has biased composition (polar residues). T318 is subject to Phosphothreonine. A phosphoserine mark is found at S321 and S323. A phosphothreonine mark is found at T325, T327, T334, and T340. At S419 the chain carries Phosphoserine. WD repeat units lie at residues 485–523 (NHGE…NKSP), 531–570 (NRDN…PRIK), 575–614 (SSAP…LVRQ), 617–656 (GHTD…QLQQ), 658–697 (DFTS…KYQL), 699–738 (LHES…SIFQ), and 740–773 (KESS…EVIY).

It belongs to the WD repeat Groucho/TLE family. Homooligomer and heterooligomer with other family members. Interacts with PAX5. Interacts with LEF1, TCF7, TCF7L1 and TCF7L2. Interacts with ZNF703; TLE4 may mediate ZNF703 transcriptional repression. Interacts with SIX3 and SIX6. Interacts with PAX2. Interacts with TLE1. Phosphorylated. PAX5 binding increases phosphorylation. In terms of processing, ubiquitinated by XIAP/BIRC4. Expressed in bone marrow-derived macrophages.

The protein resides in the nucleus. Transcriptional corepressor that binds to a number of transcription factors. Inhibits the transcriptional activation mediated by PAX5, and by CTNNB1 and TCF family members in Wnt signaling. The effects of full-length TLE family members may be modulated by association with dominant-negative AES. Essential for the transcriptional repressor activity of SIX3 during retina and lens development and for SIX3 transcriptional auto-repression. Involved in transcriptional repression of GNRHR and enhances MSX1-mediated transcriptional repression of CGA/alpha-GSU. The sequence is that of Transducin-like enhancer protein 4 (Tle4) from Mus musculus (Mouse).